The chain runs to 315 residues: uncharacterized protein (315 aa).

The next 3 helical transmembrane spans lie at 18 to 38 (IWFIIFYLFVIQALGSAIISG), 202 to 222 (ILAIAMFIVIWPVTMGILAGI), and 244 to 264 (LIYAVVIAFVCTPVAIIVIVL). Residues 288–315 (VCSTGNRSSGSTDQDISTTKQQSQEAVA) are disordered.

Its subcellular location is the membrane. This is an uncharacterized protein from Saccharomyces cerevisiae (strain ATCC 204508 / S288c) (Baker's yeast).